Consider the following 468-residue polypeptide: TFIIA-alpha and beta-like factor (468 aa).

2 disordered regions span residues 215–236 and 379–416; these read DRRL…LSLP and DSVS…SEQD. Positions 380–391 are enriched in polar residues; that stretch reads SVSNEDSTANSS. Positions 401-416 are enriched in acidic residues; it reads PEEDPLNSGDDVSEQD.

It belongs to the TFIIA subunit 1 family. Testis specific. Expressed in pachytene spermatocytes and haploid spermatids.

It localises to the nucleus. May function as a testis specific transcription factor. Binds DNA in conjunction with GTF2A2 and TBP (the TATA-binding protein) and together with GTF2A2, allows mRNA transcription. The chain is TFIIA-alpha and beta-like factor (Gtf2a1l) from Mus musculus (Mouse).